The sequence spans 307 residues: MLVYIAGSGAMGCRFGYQISKTNNDVILLDNWEDHINAIKENGLVVTGDVEETVKLPIMKPTEATQEADLIILFTKAMQLPQMLQDIKGIIGKETKVLCLLNGLGHEDVIRQYIPEHNILMGVTVWTAGLEGPGRAHLQGVGALNLQSMDPNNQDAGHQVADLLNKANLNATYDENVVPNIWRKACVNGTMNSTCALLDCTIGELFASEDGLKMVKEIIHEFVIVGQAEGVELNEEEITQYVMDTSVRAAHHYPSMHQDLVQNHRLTEIDFINGAVNTKGEKLGINTPYCRMITELVHAKEAVLNIQ.

Residues 7–12 (GSGAMG), N102, and A128 each bind NADP(+). N102 contributes to the substrate binding site. Catalysis depends on K184, which acts as the Proton donor. Substrate contacts are provided by N188, N192, and S255. An NADP(+)-binding site is contributed by E268.

It belongs to the ketopantoate reductase family.

The protein localises to the cytoplasm. It carries out the reaction (R)-pantoate + NADP(+) = 2-dehydropantoate + NADPH + H(+). It functions in the pathway cofactor biosynthesis; (R)-pantothenate biosynthesis; (R)-pantoate from 3-methyl-2-oxobutanoate: step 2/2. Its function is as follows. Catalyzes the NADPH-dependent reduction of ketopantoate into pantoic acid. The protein is 2-dehydropantoate 2-reductase (apbA) of Streptococcus pyogenes serotype M6 (strain ATCC BAA-946 / MGAS10394).